Consider the following 191-residue polypeptide: Protein RER1 homolog (191 aa).

Helical transmembrane passes span 35–55 (AFRW…IILL), 57–77 (GFYI…LLFL), and 135–155 (FFDV…LTFL).

This sequence belongs to the RER1 family.

The protein localises to the membrane. Functionally, may be involved in protein transport along the secretory pathway. The chain is Protein RER1 homolog (rer-1) from Caenorhabditis elegans.